The sequence spans 110 residues: Putative UPF0377 protein YIR040C (110 aa).

Belongs to the UPF0377 family.

This Saccharomyces cerevisiae (strain ATCC 204508 / S288c) (Baker's yeast) protein is Putative UPF0377 protein YIR040C.